A 3106-amino-acid polypeptide reads, in one-letter code: Probable polyketide synthase 29 (3106 aa).

Residues 1–11 (MVQNTDNTRNS) are compositionally biased toward polar residues. Residues 1–20 (MVQNTDNTRNSKLIRDRNDY) form a disordered region. Residues 28-461 (SGDIAVIGIG…GSNVCLILSE (434 aa)) enclose the Ketosynthase family 3 (KS3) domain. Residues C200, H339, and H384 each act as for beta-ketoacyl synthase activity in the active site. The acyl/malonyl transferase stretch occupies residues 661–694 (GVSADIIIGHSLGEVSSPYCSGMIDFQTLCYLTY). The active-site For acyl/malonyl transferase activity is S671. The tract at residues 961-1082 (PSIHGLGNNT…GNFSLTKHNS (122 aa)) is N-terminal hotdog fold. One can recognise a PKS/mFAS DH domain in the interval 961-1266 (PSIHGLGNNT…CALVSLDSNP (306 aa)). Residue H994 is the Proton acceptor; for dehydratase activity of the active site. The interval 1099–1266 (NFTSISKQDF…CALVSLDSNP (168 aa)) is C-terminal hotdog fold. The active-site Proton donor; for dehydratase activity is D1171. One can recognise a Carrier domain in the interval 2533 to 2610 (NNNEIIRSTI…QSIEIILSAH (78 aa)). S2570 carries the O-(pantetheine 4'-phosphoryl)serine modification. Residues 2609–2656 (AHNNNNKNNNNNNNINNNNKNNNNNNNKNNNNINNNINNNKNNNNNNN) adopt a coiled-coil conformation. The tract at residues 2614–2656 (NKNNNNNNNINNNNKNNNNNNNKNNNNINNNINNNKNNNNNNN) is disordered.

Requires pantetheine 4'-phosphate as cofactor.

Its function is as follows. Probable polyketide synthase. The chain is Probable polyketide synthase 29 (pks29) from Dictyostelium discoideum (Social amoeba).